Here is a 477-residue protein sequence, read N- to C-terminus: Methionine aminopeptidase 2 (477 aa).

Residues 1-121 (MAGVEEAASC…TDPPSVPICD (121 aa)) form a disordered region. At Ala2 the chain carries N-acetylalanine. Residues 36–46 (KKKKRKKKKSK) show a composition bias toward basic residues. The residue at position 45 (Ser45) is a Phosphoserine. Residues 54–78 (EPDKEAGASVDEVTRQLERQALEEK) show a composition bias toward basic and acidic residues. Residue Ser62 is modified to Phosphoserine; alternate. Ser62 carries an O-linked (GlcNAc) serine; alternate glycan. Over residues 79–91 (EKDDDDEDGDGDG) the composition is skewed to acidic residues. The segment covering 96-108 (GKKKKKKKKKRGP) has biased composition (basic residues). Residue His230 participates in substrate binding. A divalent metal cation is bound by residues Asp250, Asp261, and His330. A substrate-binding site is contributed by His338. A divalent metal cation contacts are provided by Glu363 and Glu458.

The protein belongs to the peptidase M24A family. Methionine aminopeptidase eukaryotic type 2 subfamily. In terms of assembly, binds EIF2S1 at low magnesium concentrations. Interacts strongly with the eIF-2 gamma-subunit EIF2S3. Co(2+) serves as cofactor. It depends on Zn(2+) as a cofactor. Requires Mn(2+) as cofactor. Fe(2+) is required as a cofactor. Contains approximately 12 O-linked N-acetylglucosamine (GlcNAc) residues. O-glycosylation is required for EIF2S1 binding.

It localises to the cytoplasm. The catalysed reaction is Release of N-terminal amino acids, preferentially methionine, from peptides and arylamides.. In terms of biological role, cotranslationally removes the N-terminal methionine from nascent proteins. The N-terminal methionine is often cleaved when the second residue in the primary sequence is small and uncharged (Met-Ala-, Cys, Gly, Pro, Ser, Thr, or Val). Its function is as follows. Protects eukaryotic initiation factor EIF2S1 from translation-inhibiting phosphorylation by inhibitory kinases such as EIF2AK2/PKR and EIF2AK1/HCR. Plays a critical role in the regulation of protein synthesis. The protein is Methionine aminopeptidase 2 of Bos taurus (Bovine).